Reading from the N-terminus, the 811-residue chain is Ent-13-epi-manoyl oxide synthase KSL2, chloroplastic (811 aa).

The transit peptide at 1–49 directs the protein to the chloroplast; the sequence is MALPLSTCLLFHPKESRSRRFCFSPASAASLKSGLHSATSAKIASMPTC. Residues aspartate 550, aspartate 554, asparagine 694, and glutamate 702 each contribute to the Mg(2+) site. Positions 550 to 554 match the DDXXD motif motif; sequence DDFFD.

It belongs to the terpene synthase family. It depends on Mg(2+) as a cofactor.

The protein localises to the plastid. Its subcellular location is the chloroplast. It carries out the reaction ent-8alpha-hydroxylabd-13-en-15-yl diphosphate = ent-13-epi-manoyl oxide + diphosphate. It participates in secondary metabolite biosynthesis; terpenoid biosynthesis. Its function is as follows. Involved in diterpenoid biosynthesis. Catalyzes the conversion of ent-8alpha-hydroxylabd-13-en-15-yl diphosphate to ent-13-epi-manoyl oxide. In Salvia miltiorrhiza (Chinese sage), this protein is Ent-13-epi-manoyl oxide synthase KSL2, chloroplastic.